The following is a 442-amino-acid chain: Divalent metal cation transporter MntH (442 aa).

A run of 11 helical transmembrane segments spans residues 29–49, 62–82, 106–126, 135–155, 166–186, 209–229, 258–278, 295–315, 347–367, 372–392, and 413–433; these read MLAY…PGNW, TLLT…SLCV, FCLW…ELLG, FVIP…VLLF, ALVI…ILFS, MLYI…LYLH, FALS…AATF, LLSP…ALLA, LITR…FGEN, LIVL…IPLV, and LAWL…LQSL.

This sequence belongs to the NRAMP family.

Its subcellular location is the cell inner membrane. Its function is as follows. H(+)-stimulated, divalent metal cation uptake system. This chain is Divalent metal cation transporter MntH, found in Nostoc sp. (strain PCC 7120 / SAG 25.82 / UTEX 2576).